Consider the following 486-residue polypeptide: Ribosomal protein uS12 methylthiotransferase RimO (486 aa).

Positions 9–125 (RSVALVTLGC…LSSHLEAILH (117 aa)) constitute an MTTase N-terminal domain. Residues cysteine 18, cysteine 54, cysteine 88, cysteine 191, cysteine 195, and cysteine 198 each contribute to the [4Fe-4S] cluster site. One can recognise a Radical SAM core domain in the interval 177–408 (LGSGPWAPVK…RLVEELVTQR (232 aa)). In terms of domain architecture, TRAM spans 410-482 (EERLGEVVEV…GADLLAEPLV (73 aa)).

The protein belongs to the methylthiotransferase family. RimO subfamily. Requires [4Fe-4S] cluster as cofactor.

The protein resides in the cytoplasm. The enzyme catalyses L-aspartate(89)-[ribosomal protein uS12]-hydrogen + (sulfur carrier)-SH + AH2 + 2 S-adenosyl-L-methionine = 3-methylsulfanyl-L-aspartate(89)-[ribosomal protein uS12]-hydrogen + (sulfur carrier)-H + 5'-deoxyadenosine + L-methionine + A + S-adenosyl-L-homocysteine + 2 H(+). Its function is as follows. Catalyzes the methylthiolation of an aspartic acid residue of ribosomal protein uS12. The sequence is that of Ribosomal protein uS12 methylthiotransferase RimO from Kineococcus radiotolerans (strain ATCC BAA-149 / DSM 14245 / SRS30216).